A 67-amino-acid polypeptide reads, in one-letter code: Probable tautomerase bsl7456 (67 aa).

Residue P2 is the Proton acceptor; via imino nitrogen of the active site.

This sequence belongs to the 4-oxalocrotonate tautomerase family.

The sequence is that of Probable tautomerase bsl7456 from Bradyrhizobium diazoefficiens (strain JCM 10833 / BCRC 13528 / IAM 13628 / NBRC 14792 / USDA 110).